The sequence spans 495 residues: Glutamate--tRNA ligase (495 aa).

The 'HIGH' region signature appears at 14–24; that stretch reads PSPTGYLHIGS. The 'KMSKS' region signature appears at 255 to 259; the sequence is KLSKR. Residue K258 coordinates ATP.

Belongs to the class-I aminoacyl-tRNA synthetase family. Glutamate--tRNA ligase type 1 subfamily. As to quaternary structure, monomer.

The protein resides in the cytoplasm. It carries out the reaction tRNA(Glu) + L-glutamate + ATP = L-glutamyl-tRNA(Glu) + AMP + diphosphate. Functionally, catalyzes the attachment of glutamate to tRNA(Glu) in a two-step reaction: glutamate is first activated by ATP to form Glu-AMP and then transferred to the acceptor end of tRNA(Glu). This chain is Glutamate--tRNA ligase, found in Herpetosiphon aurantiacus (strain ATCC 23779 / DSM 785 / 114-95).